Reading from the N-terminus, the 548-residue chain is (2S)-methylsuccinyl-CoA dehydrogenase (548 aa).

FAD contacts are provided by residues 282 to 291 (AVFTEPNTGS) and 315 to 317 (WIT). Serine 291 contacts substrate. 409–412 (ESAR) contacts substrate. Residues arginine 437 and 505-509 (QIHGG) contribute to the FAD site. Glutamate 532 serves as the catalytic Proton acceptor. 534-536 (AAE) is an FAD binding site.

The protein belongs to the acyl-CoA dehydrogenase family. Homodimer. FAD serves as cofactor.

It catalyses the reaction (2S)-methylsuccinyl-CoA + oxidized [electron-transfer flavoprotein] + H(+) = 2-methylfumaryl-CoA + reduced [electron-transfer flavoprotein]. Its function is as follows. Involved in the ethylmalonyl-CoA pathway, a new acetyl-CoA assimilation strategy that operates in a number of bacteria and replaces the glyoxylate cycle. Catalyzes the oxidation of (2S)-methylsuccinyl-CoA to yield mesaconyl-(C1)-CoA. Highly specific for (S)-methylsuccinyl-CoA. In Cereibacter sphaeroides (Rhodobacter sphaeroides), this protein is (2S)-methylsuccinyl-CoA dehydrogenase.